We begin with the raw amino-acid sequence, 492 residues long: N-succinylglutamate 5-semialdehyde dehydrogenase (492 aa).

220-225 (GSANTG) lines the NAD(+) pocket. Catalysis depends on residues Glu243 and Cys277.

It belongs to the aldehyde dehydrogenase family. AstD subfamily.

It carries out the reaction N-succinyl-L-glutamate 5-semialdehyde + NAD(+) + H2O = N-succinyl-L-glutamate + NADH + 2 H(+). It participates in amino-acid degradation; L-arginine degradation via AST pathway; L-glutamate and succinate from L-arginine: step 4/5. In terms of biological role, catalyzes the NAD-dependent reduction of succinylglutamate semialdehyde into succinylglutamate. The protein is N-succinylglutamate 5-semialdehyde dehydrogenase of Escherichia coli (strain UTI89 / UPEC).